Reading from the N-terminus, the 154-residue chain is Ribosomal RNA large subunit methyltransferase H (154 aa).

The S-adenosyl-L-methionine site is built by Leu70 and Gly102.

It belongs to the RNA methyltransferase RlmH family. As to quaternary structure, homodimer.

Its subcellular location is the cytoplasm. The catalysed reaction is pseudouridine(1915) in 23S rRNA + S-adenosyl-L-methionine = N(3)-methylpseudouridine(1915) in 23S rRNA + S-adenosyl-L-homocysteine + H(+). Its function is as follows. Specifically methylates the pseudouridine at position 1915 (m3Psi1915) in 23S rRNA. The protein is Ribosomal RNA large subunit methyltransferase H of Hyphomonas neptunium (strain ATCC 15444).